We begin with the raw amino-acid sequence, 488 residues long: Facilitated trehalose transporter Tret1-2 homolog (488 aa).

The Cytoplasmic portion of the chain corresponds to 1–28 (MKILMRADTHVSYSVPAEGTKANFTFSQ). A helical transmembrane segment spans residues 29–49 (VLAALSVSLCSLVVGFVSAYT). The Extracellular segment spans residues 50 to 72 (SPALVSMTDRTITSFEVTKDAGS). Residues 73–93 (WVGGIMPLAALAGGITGGPLI) form a helical membrane-spanning segment. The Cytoplasmic portion of the chain corresponds to 94–105 (EYLGRRNTILAT). A helical transmembrane segment spans residues 106-126 (AVPFIVSSLLIACAVNVIMIL). Topologically, residues 127–129 (CGR) are extracellular. The helical transmembrane segment at 130 to 150 (FLTGFCVGIASLSLPVYLGET) threads the bilayer. The Cytoplasmic segment spans residues 151-160 (LQPEVRGTLG). Residues 161–181 (LLPTALGNIGILVCYVAGSFM) form a helical membrane-spanning segment. Asn182 is a glycosylation site (N-linked (GlcNAc...) asparagine). Residues 182 to 184 (NWS) are Extracellular-facing. Residues 185-205 (ILAFLGAALPVPFLILMIIIP) traverse the membrane as a helical segment. Residues 206 to 268 (ETPRWFVNRG…ELFKRINLKP (63 aa)) lie on the Cytoplasmic side of the membrane. Residues 269–289 (LSISLGLMFFQQFSGINAVIF) traverse the membrane as a helical segment. The Extracellular portion of the chain corresponds to 290–305 (YTVQIFKDAGSTIDSN). The chain crosses the membrane as a helical span at residues 306 to 326 (LCTIIVGIVNFFATFMGIILI). Topologically, residues 327-332 (DRLGRK) are cytoplasmic. The helical transmembrane segment at 333 to 353 (ILLYVSDIAMILTLSILGGFF) threads the bilayer. Residues 354 to 372 (YCKAHGPDVSHLGWLPLSC) are Extracellular-facing. The helical transmembrane segment at 373–393 (FVIYILGFSLGFGPIPWLMMG) threads the bilayer. The Cytoplasmic segment spans residues 394–402 (EILPAKIRG). The chain crosses the membrane as a helical span at residues 403–423 (PAASVVTAFNWFCTFVVTKTF). The Extracellular portion of the chain corresponds to 424–433 (QDLTVAMGPH). A helical transmembrane segment spans residues 434-454 (GAFWLFGVVCIVGLFFVIIYV). The Cytoplasmic portion of the chain corresponds to 455–488 (PETRGKSLEEIERKMMGRVPISAVVNIKPFSFNM).

Belongs to the major facilitator superfamily. Sugar transporter (TC 2.A.1.1) family. Trehalose transporter subfamily.

It is found in the cell membrane. Functionally, fails to transport trehalose. The protein is Facilitated trehalose transporter Tret1-2 homolog of Drosophila sechellia (Fruit fly).